We begin with the raw amino-acid sequence, 152 residues long: Flagellar assembly factor FliW (152 aa).

Belongs to the FliW family. Interacts with translational regulator CsrA and flagellin(s).

It localises to the cytoplasm. Its function is as follows. Acts as an anti-CsrA protein, binds CsrA and prevents it from repressing translation of its target genes, one of which is flagellin. Binds to flagellin and participates in the assembly of the flagellum. The polypeptide is Flagellar assembly factor FliW (Caldicellulosiruptor saccharolyticus (strain ATCC 43494 / DSM 8903 / Tp8T 6331)).